The sequence spans 392 residues: Pannexin-3 (392 aa).

Over methionine 1–lysine 39 the chain is Cytoplasmic. The helical transmembrane segment at phenylalanine 40–serine 60 threads the bilayer. Topologically, residues glycine 61–serine 113 are extracellular. Residue asparagine 71 is glycosylated (N-linked (GlcNAc...) asparagine). The helical transmembrane segment at leucine 114–proline 134 threads the bilayer. Topologically, residues alanine 135–leucine 215 are cytoplasmic. The helical transmembrane segment at leucine 216–phenylalanine 236 threads the bilayer. The Extracellular portion of the chain corresponds to glutamine 237–serine 267. The helical transmembrane segment at isoleucine 268–isoleucine 288 threads the bilayer. Over tyrosine 289–proline 392 the chain is Cytoplasmic.

The protein belongs to the pannexin family. As to quaternary structure, homoheptameric.

It localises to the cell membrane. It is found in the cell junction. Its subcellular location is the gap junction. The protein localises to the endoplasmic reticulum membrane. The catalysed reaction is Ca(2+)(in) = Ca(2+)(out). It carries out the reaction ATP(in) = ATP(out). Functionally, regulator of osteoblast differentiation by functionning as a Ca(2+) channel in the endoplasmic reticulum which regulates calmodulin (CaM) pathways. Allows ATP release into the extracellular space and activation or purinergic receptors. This is Pannexin-3 from Homo sapiens (Human).